A 183-amino-acid polypeptide reads, in one-letter code: UPF0397 protein EF_2154 (183 aa).

Helical transmembrane passes span 10–30 (IVAI…VVIP), 44–64 (FLAL…GLIG), 74–94 (GSAW…FGFA), 115–135 (IFQA…LDIL), and 147–167 (QGVF…TLLM).

The protein belongs to the UPF0397 family.

Its subcellular location is the cell membrane. The chain is UPF0397 protein EF_2154 from Enterococcus faecalis (strain ATCC 700802 / V583).